The sequence spans 25 residues: LASP1 neighbor protein (25 aa).

Residues 4–24 form a helical membrane-spanning segment; sequence IFILMFFAIIGLVILSYIIYL.

Its subcellular location is the membrane. Its function is as follows. May play a key role in the skin fibroblasts (FBs)-keratinocyte-like cells (KLCs). The polypeptide is LASP1 neighbor protein (Homo sapiens (Human)).